A 385-amino-acid polypeptide reads, in one-letter code: 8-amino-7-oxononanoate synthase (385 aa).

Residue R21 coordinates substrate. 108-109 (GF) lines the pyridoxal 5'-phosphate pocket. Position 133 (H133) interacts with substrate. S179, H207, and T233 together coordinate pyridoxal 5'-phosphate. At K236 the chain carries N6-(pyridoxal phosphate)lysine. Position 352 (T352) interacts with substrate.

Belongs to the class-II pyridoxal-phosphate-dependent aminotransferase family. BioF subfamily. In terms of assembly, homodimer. The cofactor is pyridoxal 5'-phosphate.

The catalysed reaction is 6-carboxyhexanoyl-[ACP] + L-alanine + H(+) = (8S)-8-amino-7-oxononanoate + holo-[ACP] + CO2. The protein operates within cofactor biosynthesis; biotin biosynthesis. Its function is as follows. Catalyzes the decarboxylative condensation of pimeloyl-[acyl-carrier protein] and L-alanine to produce 8-amino-7-oxononanoate (AON), [acyl-carrier protein], and carbon dioxide. This Salmonella paratyphi A (strain ATCC 9150 / SARB42) protein is 8-amino-7-oxononanoate synthase.